We begin with the raw amino-acid sequence, 502 residues long: Probable cytosol aminopeptidase (502 aa).

Lys267 and Asp272 together coordinate Mn(2+). Lys279 is a catalytic residue. Residues Asp290, Asp349, and Glu351 each contribute to the Mn(2+) site. Residue Arg353 is part of the active site.

It belongs to the peptidase M17 family. Mn(2+) is required as a cofactor.

It is found in the cytoplasm. It catalyses the reaction Release of an N-terminal amino acid, Xaa-|-Yaa-, in which Xaa is preferably Leu, but may be other amino acids including Pro although not Arg or Lys, and Yaa may be Pro. Amino acid amides and methyl esters are also readily hydrolyzed, but rates on arylamides are exceedingly low.. It carries out the reaction Release of an N-terminal amino acid, preferentially leucine, but not glutamic or aspartic acids.. In terms of biological role, presumably involved in the processing and regular turnover of intracellular proteins. Catalyzes the removal of unsubstituted N-terminal amino acids from various peptides. The sequence is that of Probable cytosol aminopeptidase from Aeromonas salmonicida (strain A449).